The chain runs to 307 residues: Shikimate kinase 2, chloroplastic (307 aa).

The transit peptide at 1–60 (MEARAGLAMQSRAAVGVGAGPGVGRRGRAVIRVGKRPTAASLRVGGPAGPAAAKPLAPLY) directs the protein to the chloroplast. 101 to 108 (GMMGSGKS) is a binding site for ATP. Ser-108 lines the Mg(2+) pocket. The substrate site is built by Asp-126, Arg-151, and Gly-173. Arg-212 provides a ligand contact to ATP. The interval 285–307 (HSTSSGPVGDLIVDSQNRRTKAL) is disordered.

This sequence belongs to the shikimate kinase family. It depends on Mg(2+) as a cofactor. As to expression, expressed in panicles.

The protein resides in the plastid. It localises to the chloroplast. It carries out the reaction shikimate + ATP = 3-phosphoshikimate + ADP + H(+). The protein operates within metabolic intermediate biosynthesis; chorismate biosynthesis; chorismate from D-erythrose 4-phosphate and phosphoenolpyruvate: step 5/7. Catalyzes the specific phosphorylation of the 3-hydroxyl group of shikimic acid using ATP as a cosubstrate. This is Shikimate kinase 2, chloroplastic (SK2) from Oryza sativa subsp. japonica (Rice).